The primary structure comprises 366 residues: NADH-quinone oxidoreductase subunit D (366 aa).

The protein belongs to the complex I 49 kDa subunit family. NDH-1 is composed of 14 different subunits. Subunits NuoB, C, D, E, F, and G constitute the peripheral sector of the complex.

It localises to the cell membrane. It carries out the reaction a quinone + NADH + 5 H(+)(in) = a quinol + NAD(+) + 4 H(+)(out). In terms of biological role, NDH-1 shuttles electrons from NADH, via FMN and iron-sulfur (Fe-S) centers, to quinones in the respiratory chain. The immediate electron acceptor for the enzyme in this species is believed to be a menaquinone. Couples the redox reaction to proton translocation (for every two electrons transferred, four hydrogen ions are translocated across the cytoplasmic membrane), and thus conserves the redox energy in a proton gradient. The protein is NADH-quinone oxidoreductase subunit D of Bacillus cytotoxicus (strain DSM 22905 / CIP 110041 / 391-98 / NVH 391-98).